We begin with the raw amino-acid sequence, 328 residues long: GMP reductase (328 aa).

Catalysis depends on C176, which acts as the Thioimidate intermediate. 205 to 228 contacts NADP(+); sequence IIADGGIRTHGDIAKSIRFGASMI.

The protein belongs to the IMPDH/GMPR family. GuaC type 2 subfamily.

It carries out the reaction IMP + NH4(+) + NADP(+) = GMP + NADPH + 2 H(+). Functionally, catalyzes the irreversible NADPH-dependent deamination of GMP to IMP. It functions in the conversion of nucleobase, nucleoside and nucleotide derivatives of G to A nucleotides, and in maintaining the intracellular balance of A and G nucleotides. The chain is GMP reductase from Streptococcus pneumoniae (strain Taiwan19F-14).